Here is a 372-residue protein sequence, read N- to C-terminus: Ligninase LG3 (372 aa).

Positions 1-21 are cleaved as a signal peptide; sequence MAFKQLFAAISLALSLSAANA. Positions 22 to 28 are excised as a propeptide; the sequence is AAVIEKR. 2 cysteine pairs are disulfide-bonded: Cys31/Cys43 and Cys62/Cys148. His75 acts as the Proton acceptor in catalysis. Residues Asp76, Gly94, Asp96, and Ser98 each coordinate Ca(2+). Position 204 (His204) interacts with heme b. Residues Ser205, Asp222, Thr224, Ile227, and Asp229 each coordinate Ca(2+). Cys277 and Cys345 are oxidised to a cystine. A glycan (N-linked (GlcNAc...) asparagine) is linked at Asn285. The segment covering 350 to 361 has biased composition (low complexity); it reads FPTLTTLPGPET. The interval 350–372 is disordered; the sequence is FPTLTTLPGPETSVQRIPPPPGA.

The protein belongs to the peroxidase family. Ligninase subfamily. Heme b is required as a cofactor. It depends on Ca(2+) as a cofactor.

It catalyses the reaction 1-(3,4-dimethoxyphenyl)-2-(2-methoxyphenoxy)propane-1,3-diol + H2O2 = 3,4-dimethoxybenzaldehyde + guaiacol + glycolaldehyde + H2O. The catalysed reaction is 2 (3,4-dimethoxyphenyl)methanol + H2O2 = 2 (3,4-dimethoxyphenyl)methanol radical + 2 H2O. Its pathway is secondary metabolite metabolism; lignin degradation. Depolymerization of lignin. Catalyzes the C(alpha)-C(beta) cleavage of the propyl side chains of lignin. The polypeptide is Ligninase LG3 (GLG3) (Phanerodontia chrysosporium (White-rot fungus)).